The sequence spans 271 residues: Formamidopyrimidine-DNA glycosylase (271 aa).

Catalysis depends on Pro2, which acts as the Schiff-base intermediate with DNA. Glu3 acts as the Proton donor in catalysis. Residue Lys58 is the Proton donor; for beta-elimination activity of the active site. DNA is bound by residues His92, Arg111, and Lys152. The FPG-type zinc-finger motif lies at 237–271 (YVYGKVQKPCKICNNTITLIRQNGRSTYFCNACQN). Arg261 functions as the Proton donor; for delta-elimination activity in the catalytic mechanism.

This sequence belongs to the FPG family. As to quaternary structure, monomer. Zn(2+) is required as a cofactor.

The enzyme catalyses Hydrolysis of DNA containing ring-opened 7-methylguanine residues, releasing 2,6-diamino-4-hydroxy-5-(N-methyl)formamidopyrimidine.. It carries out the reaction 2'-deoxyribonucleotide-(2'-deoxyribose 5'-phosphate)-2'-deoxyribonucleotide-DNA = a 3'-end 2'-deoxyribonucleotide-(2,3-dehydro-2,3-deoxyribose 5'-phosphate)-DNA + a 5'-end 5'-phospho-2'-deoxyribonucleoside-DNA + H(+). Functionally, involved in base excision repair of DNA damaged by oxidation or by mutagenic agents. Acts as a DNA glycosylase that recognizes and removes damaged bases. Has a preference for oxidized purines, such as 7,8-dihydro-8-oxoguanine (8-oxoG). Has AP (apurinic/apyrimidinic) lyase activity and introduces nicks in the DNA strand. Cleaves the DNA backbone by beta-delta elimination to generate a single-strand break at the site of the removed base with both 3'- and 5'-phosphates. This Wolbachia sp. subsp. Brugia malayi (strain TRS) protein is Formamidopyrimidine-DNA glycosylase.